We begin with the raw amino-acid sequence, 1048 residues long: Probable histidine kinase 2 (1048 aa).

Residues 1 to 16 (MREVEEVSKWRRRCCY) lie on the Cytoplasmic side of the membrane. A helical membrane pass occupies residues 17 to 37 (FWILFPLAVIATCMTITVVTF). Residues 38 to 336 (CSSTMYMTEV…AMVGVFRRGG (299 aa)) are Extracellular-facing. A helical transmembrane segment spans residues 337 to 357 (VTMVAVACAAAAAATVACVLM). The Cytoplasmic portion of the chain corresponds to 358–1048 (ARALRRAVAR…AVHGVCKGKN (691 aa)). In terms of domain architecture, Histidine kinase spans 398–662 (SASHDIRSAL…CFGFNVLLKT (265 aa)). A Phosphohistidine; by autocatalysis modification is found at histidine 401. The region spanning 912–1044 (HVLLVEDTLV…RIVEAVHGVC (133 aa)) is the Response regulatory domain. Position 975 is a 4-aspartylphosphate (aspartate 975).

Activation probably requires a transfer of a phosphate group between a His in the transmitter domain and an Asp of the receiver domain.

It localises to the cell membrane. It carries out the reaction ATP + protein L-histidine = ADP + protein N-phospho-L-histidine.. Its function is as follows. Cytokinin receptor related to bacterial two-component regulators. Functions as a histidine kinase and transmits the stress signal to a downstream MAPK cascade. The sequence is that of Probable histidine kinase 2 from Oryza sativa subsp. indica (Rice).